Consider the following 405-residue polypeptide: Glucose-1-phosphate adenylyltransferase (405 aa).

Alpha-D-glucose 1-phosphate is bound by residues Y96, G161, 176–177, and S194; that span reads EK.

This sequence belongs to the bacterial/plant glucose-1-phosphate adenylyltransferase family. In terms of assembly, homotetramer.

The enzyme catalyses alpha-D-glucose 1-phosphate + ATP + H(+) = ADP-alpha-D-glucose + diphosphate. It functions in the pathway glycan biosynthesis; glycogen biosynthesis. Involved in the biosynthesis of ADP-glucose, a building block required for the elongation reactions to produce glycogen. Catalyzes the reaction between ATP and alpha-D-glucose 1-phosphate (G1P) to produce pyrophosphate and ADP-Glc. The polypeptide is Glucose-1-phosphate adenylyltransferase (Photobacterium profundum (strain SS9)).